A 213-amino-acid polypeptide reads, in one-letter code: MKAYQRQFIEFALNKQVLKFGEFTLKSGRTSPYFFNAGLFNTGRDLALLGRFYAEALVDSGIEFDLLFGPAYKGIPIATTTAVALAEHHERDVPYCFNRKEAKTHGEGGTLVGSPLQGRVMLVDDVITAGTAIRESMEIIGAGGATLAGVLISLDRQERGRADISAIQEVERDYHCKVISIVTLKDLIVYLEEKPEMADHLAAVRAYREQYGV.

Position 26 (K26) interacts with 5-phospho-alpha-D-ribose 1-diphosphate. Residue 34 to 35 coordinates orotate; the sequence is FF. Residues 72 to 73, R99, K100, K103, H105, and 124 to 132 contribute to the 5-phospho-alpha-D-ribose 1-diphosphate site; these read YK and DDVITAGTA. Positions 128 and 156 each coordinate orotate.

Belongs to the purine/pyrimidine phosphoribosyltransferase family. PyrE subfamily. In terms of assembly, homodimer. Requires Mg(2+) as cofactor.

It catalyses the reaction orotidine 5'-phosphate + diphosphate = orotate + 5-phospho-alpha-D-ribose 1-diphosphate. It functions in the pathway pyrimidine metabolism; UMP biosynthesis via de novo pathway; UMP from orotate: step 1/2. Catalyzes the transfer of a ribosyl phosphate group from 5-phosphoribose 1-diphosphate to orotate, leading to the formation of orotidine monophosphate (OMP). The chain is Orotate phosphoribosyltransferase from Serratia proteamaculans (strain 568).